Here is a 99-residue protein sequence, read N- to C-terminus: MESEQMLEGQTQVAENPHSEYGLTDSVERIVENEKINAEKSSKQKVDLQSLPTRAYLDQTVVPILLQGLAVLAKERPPNPIEFLASYLLKNKAQFEDRN.

N-acetylmethionine is present on Met-1. Residues 1–26 form a disordered region; sequence MESEQMLEGQTQVAENPHSEYGLTDS. Ser-19 carries the phosphoserine modification. Lys-35 carries the N6-acetyllysine; alternate modification. Lys-35 is covalently cross-linked (Glycyl lysine isopeptide (Lys-Gly) (interchain with G-Cter in SUMO2); alternate).

Belongs to the dpy-30 family. In terms of assembly, homodimer. Core component of several methyltransferase-containing complexes including MLL1/MLL, MLL2/3 (also named ASCOM complex) and MLL4/WBP7. Each complex is at least composed of ASH2L, RBBP5, WDR5, DPY30, one or more specific histone methyltransferases (KMT2A/MLL1, KMT2D/MLL2, KMT2C/MLL3 and KMT2B/MLL4), and the facultative components MEN1, HCFC1, HCFC2, NCOA6, KDM6A, PAXIP1/PTIP, PAGR1 and alpha- and beta-tubulin PAXIP1/PTIP, PAGR1 and alpha- and beta-tubulin. Interacts with ASH2L. The interaction with ASH2L is direct. Interacts with ARFGEF1. Component of the SET1 complex, at least composed of the catalytic subunit (SETD1A or SETD1B), WDR5, WDR82, RBBP5, ASH2L/ASH2, CXXC1/CFP1, HCFC1 and DPY30.

The protein resides in the nucleus. Its subcellular location is the golgi apparatus. It is found in the trans-Golgi network. As part of the MLL1/MLL complex, involved in the methylation of histone H3 at 'Lys-4', particularly trimethylation. Histone H3 'Lys-4' methylation represents a specific tag for epigenetic transcriptional activation. May play some role in histone H3 acetylation. In embryonic stem (ES) cells, plays a crucial role in the differentiation potential, particularly along the neural lineage, regulating gene induction and histone H3 'Lys-4' methylation at key developmental loci, including that mediated by retinoic acid. Does not affect ES cell self-renewal. May also play an indirect or direct role in endosomal transport. The protein is Protein dpy-30 homolog (Dpy30) of Mus musculus (Mouse).